A 310-amino-acid chain; its full sequence is Tryptophan 2,3-dioxygenase (310 aa).

Residues 1–39 (MQPPGNDAPAGCPFSGARAQGTQAAHEAPHVPGDAGEQA) are disordered. Residues 79–83 (FIIQH), Y141, and R145 contribute to the substrate site. Position 268 (H268) interacts with heme. T282 provides a ligand contact to substrate.

This sequence belongs to the tryptophan 2,3-dioxygenase family. In terms of assembly, homotetramer. It depends on heme as a cofactor.

The enzyme catalyses L-tryptophan + O2 = N-formyl-L-kynurenine. It participates in amino-acid degradation; L-tryptophan degradation via kynurenine pathway; L-kynurenine from L-tryptophan: step 1/2. Heme-dependent dioxygenase that catalyzes the oxidative cleavage of the L-tryptophan (L-Trp) pyrrole ring and converts L-tryptophan to N-formyl-L-kynurenine. Catalyzes the oxidative cleavage of the indole moiety. This Burkholderia multivorans (strain ATCC 17616 / 249) protein is Tryptophan 2,3-dioxygenase.